A 305-amino-acid polypeptide reads, in one-letter code: Nucleotide-binding protein Mpe_A3336 (305 aa).

22-29 lines the ATP pocket; it reads GISGSGKS. Residue 74-77 participates in GTP binding; the sequence is DVRS.

The protein belongs to the RapZ-like family.

Displays ATPase and GTPase activities. The chain is Nucleotide-binding protein Mpe_A3336 from Methylibium petroleiphilum (strain ATCC BAA-1232 / LMG 22953 / PM1).